We begin with the raw amino-acid sequence, 91 residues long: Ragulator complex protein LAMTOR5 homolog (91 aa).

The protein belongs to the LAMTOR5 family. Part of the Ragulator complex.

The protein resides in the cytoplasm. It localises to the lysosome. In terms of biological role, regulator of the TOR pathway, a signaling cascade that promotes cell growth in response to growth factors, energy levels, and amino acids. As part of the Ragulator complex, may activate the TOR signaling cascade in response to amino acids. This Nematostella vectensis (Starlet sea anemone) protein is Ragulator complex protein LAMTOR5 homolog.